The following is a 126-amino-acid chain: MDISTPCIKCQVHSKYIEEQSEPSKNRYVFAYIITIKNLSKTTVQLMSRSWLITDSNGKQLTIEGDGVVGQQPVIEANDEYTYTSGTVIETPVGVMQGHYVMTDHKGIDFITEVDPFRLAIPNILN.

Residues Asp2–Asn126 enclose the ApaG domain.

This is Protein ApaG from Vibrio atlanticus (strain LGP32) (Vibrio splendidus (strain Mel32)).